We begin with the raw amino-acid sequence, 119 residues long: Large ribosomal subunit protein bL20 (119 aa).

The protein belongs to the bacterial ribosomal protein bL20 family.

In terms of biological role, binds directly to 23S ribosomal RNA and is necessary for the in vitro assembly process of the 50S ribosomal subunit. It is not involved in the protein synthesizing functions of that subunit. This Azorhizobium caulinodans (strain ATCC 43989 / DSM 5975 / JCM 20966 / LMG 6465 / NBRC 14845 / NCIMB 13405 / ORS 571) protein is Large ribosomal subunit protein bL20.